Here is a 298-residue protein sequence, read N- to C-terminus: Acetylglutamate kinase (298 aa).

Residues 69–70 (GG), R91, and N196 each bind substrate.

This sequence belongs to the acetylglutamate kinase family. ArgB subfamily.

The protein localises to the cytoplasm. The enzyme catalyses N-acetyl-L-glutamate + ATP = N-acetyl-L-glutamyl 5-phosphate + ADP. It participates in amino-acid biosynthesis; L-arginine biosynthesis; N(2)-acetyl-L-ornithine from L-glutamate: step 2/4. In terms of biological role, catalyzes the ATP-dependent phosphorylation of N-acetyl-L-glutamate. In Nitrobacter winogradskyi (strain ATCC 25391 / DSM 10237 / CIP 104748 / NCIMB 11846 / Nb-255), this protein is Acetylglutamate kinase.